A 495-amino-acid polypeptide reads, in one-letter code: Cysteine--tRNA ligase (495 aa).

Cys29 lines the Zn(2+) pocket. The 'HIGH' region signature appears at 31–41 (VTVYDDSHVGH). Zn(2+) contacts are provided by Cys209, His234, and Glu238. A 'KMSKS' region motif is present at residues 266–270 (KMSKS). Residue Lys269 participates in ATP binding.

Belongs to the class-I aminoacyl-tRNA synthetase family. In terms of assembly, monomer. Zn(2+) serves as cofactor.

It is found in the cytoplasm. It catalyses the reaction tRNA(Cys) + L-cysteine + ATP = L-cysteinyl-tRNA(Cys) + AMP + diphosphate. The chain is Cysteine--tRNA ligase (cysS) from Aquifex aeolicus (strain VF5).